Here is a 58-residue protein sequence, read N- to C-terminus: UPF0337 protein CE1672 (58 aa).

Over residues 1–39 (MGLGDKIRNTAEKASGKVKEATGKATDNEKLEAEGKTDQ) the composition is skewed to basic and acidic residues. The interval 1–58 (MGLGDKIRNTAEKASGKVKEATGKATDNEKLEAEGKTDQFKGNAKNTVENAKDTLRGN) is disordered.

The protein belongs to the UPF0337 (CsbD) family.

This is UPF0337 protein CE1672 from Corynebacterium efficiens (strain DSM 44549 / YS-314 / AJ 12310 / JCM 11189 / NBRC 100395).